The sequence spans 265 residues: Undecaprenyl-diphosphatase 1 (265 aa).

Transmembrane regions (helical) follow at residues 4–24 (IIIA…PISS), 42–62 (AKTF…ILYH), 84–104 (FHVF…HDVI), 108–128 (LFQP…MILA), 184–204 (SEFS…LDLL), 217–237 (MFAV…VTFL), and 245–265 (LKPF…FVLL).

It belongs to the UppP family.

The protein localises to the cell membrane. The enzyme catalyses di-trans,octa-cis-undecaprenyl diphosphate + H2O = di-trans,octa-cis-undecaprenyl phosphate + phosphate + H(+). Functionally, catalyzes the dephosphorylation of undecaprenyl diphosphate (UPP). Confers resistance to bacitracin. The chain is Undecaprenyl-diphosphatase 1 from Bacillus cereus (strain ZK / E33L).